Reading from the N-terminus, the 238-residue chain is MATKKQSELYSGKAKTVYITDDPTQLILYFRDDTSAFDGKKIERFSRKGEINNKFNAFIMEKLAAAGIPTHFERLLSEQESLVKRLEMFPIECVVRNIATGSLCRRLGVQDGLDLDPPVFEFFLKDDARHDPMINEYHIRTFGWANPKQVEQMKEYTFRINDILKVLFLEAGLLLVDYKLEFGDVQGQVLLGDEFTPDGCRLWDVKTREKLDKDRFRHGLGGVTEAYEEVARRLGMSL.

The protein belongs to the SAICAR synthetase family.

The enzyme catalyses 5-amino-1-(5-phospho-D-ribosyl)imidazole-4-carboxylate + L-aspartate + ATP = (2S)-2-[5-amino-1-(5-phospho-beta-D-ribosyl)imidazole-4-carboxamido]succinate + ADP + phosphate + 2 H(+). It participates in purine metabolism; IMP biosynthesis via de novo pathway; 5-amino-1-(5-phospho-D-ribosyl)imidazole-4-carboxamide from 5-amino-1-(5-phospho-D-ribosyl)imidazole-4-carboxylate: step 1/2. The chain is Phosphoribosylaminoimidazole-succinocarboxamide synthase from Nitrosococcus oceani (strain ATCC 19707 / BCRC 17464 / JCM 30415 / NCIMB 11848 / C-107).